Consider the following 85-residue polypeptide: Putative membrane protein insertion efficiency factor (85 aa).

Residues 62–85 form a disordered region; that stretch reads PLGSDGYDPVPEPKDRKPPHSPAG.

It belongs to the UPF0161 family.

It localises to the cell inner membrane. Functionally, could be involved in insertion of integral membrane proteins into the membrane. This is Putative membrane protein insertion efficiency factor from Ruegeria pomeroyi (strain ATCC 700808 / DSM 15171 / DSS-3) (Silicibacter pomeroyi).